We begin with the raw amino-acid sequence, 467 residues long: MAAIMSSYLFRGILMNLRFAQFLKNISSFESRIEKLSDIINYGRLVSINGLILEVVGLNTSIGSECLIERTIDGKNANINAEVIGFSGEKTFLLSFEDIHGIFPGARVFSKIASNSNFFIKKLPLGMELLGRVLDGRGQPLDQLPKIDHKYYSTIKNYSINPLNRTPITEVLDTGIRAINGLLTIGRGQKIGIFSSSGIGKSILLGMIARYTQADIIVIALIGERGREVKDFIENILGLAGLSRSVIIAAPADVSPLLKIKAASYATNIAEYFYKNNKHVLLIMDSLTRYAMAQREISLSLGELPVSKGYPSSIFSKIPNLIERTGIFNKNKGSITSFYTVLTEGEDEQDPVSHLARSVLDGHIMLSRYYADLGHYPAIDIESSISRVMPNIINAKQYSQAFYFKKLVASYQRNRDLINIGAYVSGTDVILDHAIKIWPKLEKFLQQEISEKSDYLFSCEALNKIFI.

Position 195 to 202 (195 to 202 (SSSGIGKS)) interacts with ATP.

Belongs to the ATPase alpha/beta chains family.

The protein resides in the cytoplasm. It carries out the reaction ATP + H2O + 4 H(+)(in) = ADP + phosphate + 5 H(+)(out). In terms of biological role, probable catalytic subunit of a protein translocase for flagellum-specific export, or a proton translocase involved in local circuits at the flagellum. May be involved in a specialized protein export pathway that proceeds without signal peptide cleavage. The polypeptide is Flagellum-specific ATP synthase (fliI) (Buchnera aphidicola subsp. Acyrthosiphon pisum (strain APS) (Acyrthosiphon pisum symbiotic bacterium)).